The primary structure comprises 172 residues: Putative Dresden prostate carcinoma protein 2 (172 aa).

The interval 40–61 (QCEEEEAMTPRPTKARAPLPSA) is disordered.

Very high expression in prostate and prostate cancer. Faint expression in other tissues.

This Homo sapiens (Human) protein is Putative Dresden prostate carcinoma protein 2 (HMGN2P46).